We begin with the raw amino-acid sequence, 233 residues long: Beta-fibrinogenase brevinase (233 aa).

Residues 1-224 form the Peptidase S1 domain; the sequence is VIGGDECNIN…YIDWIQSIIA (224 aa). 6 disulfides stabilise this stretch: C7/C138, C25/C41, C73/C231, C117/C185, C149/C164, and C175/C200. H40 functions as the Charge relay system in the catalytic mechanism. N54 carries an N-linked (GlcNAc...) asparagine glycan. The Charge relay system role is filled by D85. N-linked (GlcNAc...) asparagine glycosylation occurs at N129. Residues 176-178 carry the Cell attachment site motif; that stretch reads RGD. The Charge relay system role is filled by S179. N226 carries N-linked (GlcNAc...) asparagine glycosylation.

It belongs to the peptidase S1 family. Snake venom subfamily. As to quaternary structure, heterodimer of the brevinase A chain and the brevinase B chain. As to expression, expressed by the venom gland.

The protein resides in the secreted. With respect to regulation, the fibrinolytic activity is completely inhibited by PMSF, diisopropylfluorophosphate (DFP), pefabloc, dithiothreitol (DTT) and Zn(2+), but not by Pepstatin A, E64, iodoacetate, chymostatin, tosyl-Lphenylalanine chloromethyl ketone (TPCK), soybean trypsin inhibitor (SBTI), phosphoramidon, Ca(2+), Co(2+), Cu(2+), Fe(2+), Mg(2+), Mn(2+), K(+), and Na(+). Snake venom serine protease that has fibrinogenolytic activities. Preferentially cleaves the Bbeta-chain (FGB) and more slowly the Aa-chain (FGA) of fibrinogen, but does not affect the gamma-chain. Also has fibrinolytic activity. May play a role in antithrombotic reaction as well as thrombolytic reaction. This Gloydius blomhoffii (Mamushi) protein is Beta-fibrinogenase brevinase.